The sequence spans 225 residues: Small ribosomal subunit protein uS3 (225 aa).

A KH type-2 domain is found at 38 to 106 (IRRFLQKKFK…PIGMNIIEVK (69 aa)).

Belongs to the universal ribosomal protein uS3 family. As to quaternary structure, part of the 30S ribosomal subunit. Forms a tight complex with proteins S10 and S14.

Binds the lower part of the 30S subunit head. Binds mRNA in the 70S ribosome, positioning it for translation. This is Small ribosomal subunit protein uS3 from Leptospira biflexa serovar Patoc (strain Patoc 1 / Ames).